The following is a 422-amino-acid chain: DNA (cytosine-5)-methyltransferase 3-like (422 aa).

A compositionally biased stretch (polar residues) spans 1–11 (MGSRETPSSCS). The tract at residues 1–50 (MGSRETPSSCSKTHETLNLETPESSSTDPDSPLEEQWPKSAPDLKEEDSM) is disordered. The span at 20-30 (ETPESSSTDPD) shows a compositional bias: low complexity. Residues 76–208 (EVNVNQRNIE…LKAFHDREGA (133 aa)) enclose the ADD domain. The GATA-type; atypical zinc-finger motif lies at 87–117 (ICLCCGSLQVYAQHPLFEGGICAPCKDKFLE). The segment at 128–184 (QSYCTICCSGHTLFICESPDCTRCYCFECVDILVGPGTSERINAMACWVCFLCLPFS) adopts a PHD-type; atypical zinc-finger fold.

As to quaternary structure, homodimer. Heterotetramer composed of 1 DNMT3A homodimer and 2 DNMT3L subunits (DNMT3L-DNMT3A-DNMT3A-DNMT3L). Interacts with histone H3 (via N-terminus); interaction is strongly inhibited by methylation at lysine 4 (H3K4me). Interacts with EZH2; the interaction is direct. Interacts with SPOCD1.

It localises to the nucleus. In terms of biological role, catalytically inactive regulatory factor of DNA methyltransferases that can either promote or inhibit DNA methylation depending on the context. Essential for the function of DNMT3A and DNMT3B: activates DNMT3A and DNMT3B by binding to their catalytic domain. Acts by accelerating the binding of DNA and S-adenosyl-L-methionine (AdoMet) to the methyltransferases and dissociates from the complex after DNA binding to the methyltransferases. Recognizes unmethylated histone H3 lysine 4 (H3K4me0) and induces de novo DNA methylation by recruitment or activation of DNMT3. Plays a key role in embryonic stem cells and germ cells. In germ cells, required for the methylation of imprinted loci together with DNMT3A. In male germ cells, specifically required to methylate retrotransposons, preventing their mobilization. Plays a key role in embryonic stem cells (ESCs) by acting both as an positive and negative regulator of DNA methylation. While it promotes DNA methylation of housekeeping genes together with DNMT3A and DNMT3B, it also acts as an inhibitor of DNA methylation at the promoter of bivalent genes. Interacts with the EZH2 component of the PRC2/EED-EZH2 complex, preventing interaction of DNMT3A and DNMT3B with the PRC2/EED-EZH2 complex, leading to maintain low methylation levels at the promoters of bivalent genes. Promotes differentiation of ESCs into primordial germ cells by inhibiting DNA methylation at the promoter of RHOX5, thereby activating its expression. This is DNA (cytosine-5)-methyltransferase 3-like (Dnmt3l) from Rattus norvegicus (Rat).